A 659-amino-acid polypeptide reads, in one-letter code: Probable acyl-coenzyme A oxidase acox-1.5 (659 aa).

FAD is bound by residues 148 to 151 (YAQT), 156 to 157 (GT), and glycine 190. Substrate is bound by residues 284 to 287 (KVGY) and arginine 294. FAD-binding positions include arginine 319 and 339 to 342 (QQYR). Residues histidine 395 and glutamine 403 each contribute to the ATP site. Residue glycine 410 coordinates FAD. 432–433 (YE) lines the substrate pocket. Glutamate 433 serves as the catalytic Proton acceptor. Glutamate 435 is a binding site for FAD. 524–527 (KAAR) is an ATP binding site. Positions 657 to 659 (SKL) match the Microbody targeting signal motif.

Belongs to the acyl-CoA oxidase family. Homodimer. FAD is required as a cofactor.

Its subcellular location is the peroxisome. It functions in the pathway lipid metabolism; peroxisomal fatty acid beta-oxidation. Its activity is regulated as follows. Activated by ATP. ATP binding leads to a conformational change that promotes FAD cofactor binding and enzyme activity. ATP binding likely occurs during acox-1.5 folding and/or dimer formation. Involved in the first step of peroxisomal beta-oxidation by catalyzing the desaturation of fatty acid-derived side chains. In Caenorhabditis elegans, this protein is Probable acyl-coenzyme A oxidase acox-1.5.